Here is a 129-residue protein sequence, read N- to C-terminus: MAFPTTSAQQAETNRKILEEIQTKKQLLAGGIINLGLSPPNQMPAPQLLGQPTTVNPDFQAGVGIATNATSTARSAFNPTSSTTLGFFIPQDSYFGNSFIPVLPRLEPLPSPATTPTTPNAPPSHSISK.

The tract at residues 105 to 129 (RLEPLPSPATTPTTPNAPPSHSISK) is disordered.

Belongs to the SOSS-C family.

In Drosophila simulans (Fruit fly), this protein is SOSS complex subunit C homolog.